The sequence spans 519 residues: ATP synthase subunit alpha (519 aa).

174–181 (GDRQTGKT) is a binding site for ATP.

This sequence belongs to the ATPase alpha/beta chains family. As to quaternary structure, F-type ATPases have 2 components, CF(1) - the catalytic core - and CF(0) - the membrane proton channel. CF(1) has five subunits: alpha(3), beta(3), gamma(1), delta(1), epsilon(1). CF(0) has three main subunits: a(1), b(2) and c(9-12). The alpha and beta chains form an alternating ring which encloses part of the gamma chain. CF(1) is attached to CF(0) by a central stalk formed by the gamma and epsilon chains, while a peripheral stalk is formed by the delta and b chains.

The protein resides in the cell inner membrane. It carries out the reaction ATP + H2O + 4 H(+)(in) = ADP + phosphate + 5 H(+)(out). In terms of biological role, produces ATP from ADP in the presence of a proton gradient across the membrane. The alpha chain is a regulatory subunit. The protein is ATP synthase subunit alpha of Paracidovorax citrulli (strain AAC00-1) (Acidovorax citrulli).